We begin with the raw amino-acid sequence, 542 residues long: Chaperonin GroEL (542 aa).

ATP-binding positions include 29–32 (TLGP), 86–90 (DGTTT), G413, 476–478 (NAA), and D492. Positions 523 to 542 (EPAAPAMPGGMDPSMMGGMM) are disordered. A compositionally biased stretch (low complexity) spans 526 to 542 (APAMPGGMDPSMMGGMM).

It belongs to the chaperonin (HSP60) family. As to quaternary structure, forms a cylinder of 14 subunits composed of two heptameric rings stacked back-to-back. Interacts with the co-chaperonin GroES.

The protein resides in the cytoplasm. It carries out the reaction ATP + H2O + a folded polypeptide = ADP + phosphate + an unfolded polypeptide.. Functionally, together with its co-chaperonin GroES, plays an essential role in assisting protein folding. The GroEL-GroES system forms a nano-cage that allows encapsulation of the non-native substrate proteins and provides a physical environment optimized to promote and accelerate protein folding. The chain is Chaperonin GroEL from Streptococcus uberis (strain ATCC BAA-854 / 0140J).